The chain runs to 249 residues: Small ribosomal subunit protein uS2 (249 aa).

It belongs to the universal ribosomal protein uS2 family.

The sequence is that of Small ribosomal subunit protein uS2 from Bordetella avium (strain 197N).